Here is a 495-residue protein sequence, read N- to C-terminus: Ribosomal protein uS12 methylthiotransferase RimO (495 aa).

Residues 5–121 enclose the MTTase N-terminal domain; it reads RTVALVTLGC…ISDRLQTILN (117 aa). [4Fe-4S] cluster is bound by residues Cys-14, Cys-50, and Cys-84. The disordered stretch occupies residues 145–183; that stretch reads QSAGADVALPGHGAPEGLPEDLPEGLAPESGPRAPLRRR. Positions 184–415 constitute a Radical SAM core domain; it reads LDGSPVASVK…RLAEELVAQR (232 aa). 3 residues coordinate [4Fe-4S] cluster: Cys-198, Cys-202, and Cys-205. Residues 417–484 enclose the TRAM domain; sequence EERVGETVHV…GVDLVAEPLP (68 aa).

Belongs to the methylthiotransferase family. RimO subfamily. The cofactor is [4Fe-4S] cluster.

Its subcellular location is the cytoplasm. The catalysed reaction is L-aspartate(89)-[ribosomal protein uS12]-hydrogen + (sulfur carrier)-SH + AH2 + 2 S-adenosyl-L-methionine = 3-methylsulfanyl-L-aspartate(89)-[ribosomal protein uS12]-hydrogen + (sulfur carrier)-H + 5'-deoxyadenosine + L-methionine + A + S-adenosyl-L-homocysteine + 2 H(+). In terms of biological role, catalyzes the methylthiolation of an aspartic acid residue of ribosomal protein uS12. This chain is Ribosomal protein uS12 methylthiotransferase RimO, found in Streptomyces avermitilis (strain ATCC 31267 / DSM 46492 / JCM 5070 / NBRC 14893 / NCIMB 12804 / NRRL 8165 / MA-4680).